Consider the following 610-residue polypeptide: UvrABC system protein C (610 aa).

One can recognise a GIY-YIG domain in the interval 19–97 (GAPGVYKMLD…IKRHKPRYNI (79 aa)). Residues 207 to 242 (EALIDRLAQRMEQAAQRLEFEKAARYRDQISNLRTV) enclose the UVR domain.

It belongs to the UvrC family. Interacts with UvrB in an incision complex.

It localises to the cytoplasm. Its function is as follows. The UvrABC repair system catalyzes the recognition and processing of DNA lesions. UvrC both incises the 5' and 3' sides of the lesion. The N-terminal half is responsible for the 3' incision and the C-terminal half is responsible for the 5' incision. The protein is UvrABC system protein C of Methylococcus capsulatus (strain ATCC 33009 / NCIMB 11132 / Bath).